The following is a 606-amino-acid chain: Polypeptide N-acetylgalactosaminyltransferase 9 (606 aa).

Over 1–6 (MAVARK) the chain is Cytoplasmic. Residues 7-29 (IRTLLTVNILVFVGIVLFSVYCR) traverse the membrane as a helical; Signal-anchor for type II membrane protein segment. Over 30-606 (LQGRSQELVR…IRNWIKHARH (577 aa)) the chain is Lumenal. The disordered stretch occupies residues 43–62 (GGCRPRPATPAPGSPLRSGG). Intrachain disulfides connect Cys-144–Cys-375 and Cys-366–Cys-445. Residues 153–264 (LPQVSVVFIF…TGWAEPALSR (112 aa)) form a catalytic subdomain A region. Residues Asp-194 and Arg-225 each contribute to the substrate site. The Mn(2+) site is built by Asp-248, His-250, and His-380. The tract at residues 321-383 (PIRTPAMIGC…PCSRVAHIER (63 aa)) is catalytic subdomain B. Positions 383 and 388 each coordinate substrate. Asn-463 carries N-linked (GlcNAc...) asparagine glycosylation. The region spanning 467–603 (TYGEVRNSKA…KWMIRNWIKH (137 aa)) is the Ricin B-type lectin domain. Intrachain disulfides connect Cys-480–Cys-496, Cys-528–Cys-543, and Cys-570–Cys-590.

It belongs to the glycosyltransferase 2 family. GalNAc-T subfamily. Mn(2+) is required as a cofactor.

Its subcellular location is the golgi apparatus membrane. It carries out the reaction L-seryl-[protein] + UDP-N-acetyl-alpha-D-galactosamine = a 3-O-[N-acetyl-alpha-D-galactosaminyl]-L-seryl-[protein] + UDP + H(+). The enzyme catalyses L-threonyl-[protein] + UDP-N-acetyl-alpha-D-galactosamine = a 3-O-[N-acetyl-alpha-D-galactosaminyl]-L-threonyl-[protein] + UDP + H(+). The protein operates within protein modification; protein glycosylation. In terms of biological role, catalyzes the initial reaction in O-linked oligosaccharide biosynthesis, the transfer of an N-acetyl-D-galactosamine residue to a serine or threonine residue on the protein receptor. Does not glycosylate apomucin or SDC3. This chain is Polypeptide N-acetylgalactosaminyltransferase 9 (GALNT9), found in Macaca fascicularis (Crab-eating macaque).